Reading from the N-terminus, the 78-residue chain is Acyl carrier protein (78 aa).

The region spanning 2 to 77 (SDIAERVKKI…DAIKFLEKNA (76 aa)) is the Carrier domain. Residue serine 37 is modified to O-(pantetheine 4'-phosphoryl)serine.

Belongs to the acyl carrier protein (ACP) family. In terms of processing, 4'-phosphopantetheine is transferred from CoA to a specific serine of apo-ACP by AcpS. This modification is essential for activity because fatty acids are bound in thioester linkage to the sulfhydryl of the prosthetic group.

The protein resides in the cytoplasm. The protein operates within lipid metabolism; fatty acid biosynthesis. Functionally, carrier of the growing fatty acid chain in fatty acid biosynthesis. The polypeptide is Acyl carrier protein (Azorhizobium caulinodans (strain ATCC 43989 / DSM 5975 / JCM 20966 / LMG 6465 / NBRC 14845 / NCIMB 13405 / ORS 571)).